Here is a 424-residue protein sequence, read N- to C-terminus: Elongator complex protein 4 (424 aa).

It belongs to the ELP4 family. As to quaternary structure, component of the elongator complex which consists of ELP1, ELP2, ELP3, ELP4, ELP5 and ELP6. In terms of tissue distribution, widely expressed.

The protein resides in the cytoplasm. Its subcellular location is the nucleus. It functions in the pathway tRNA modification; 5-methoxycarbonylmethyl-2-thiouridine-tRNA biosynthesis. In terms of biological role, component of the elongator complex which is required for multiple tRNA modifications, including mcm5U (5-methoxycarbonylmethyl uridine), mcm5s2U (5-methoxycarbonylmethyl-2-thiouridine), and ncm5U (5-carbamoylmethyl uridine). The elongator complex catalyzes the formation of carboxymethyluridine in the wobble base at position 34 in tRNAs. In Homo sapiens (Human), this protein is Elongator complex protein 4 (ELP4).